The primary structure comprises 407 residues: Histidine--tRNA ligase (407 aa).

This sequence belongs to the class-II aminoacyl-tRNA synthetase family. In terms of assembly, homodimer.

It localises to the cytoplasm. The enzyme catalyses tRNA(His) + L-histidine + ATP = L-histidyl-tRNA(His) + AMP + diphosphate + H(+). The sequence is that of Histidine--tRNA ligase from Wolbachia pipientis subsp. Culex pipiens (strain wPip).